The following is a 610-amino-acid chain: UvrABC system protein C (610 aa).

Residues 16–94 enclose the GIY-YIG domain; the sequence is SQPGVYRMYD…IKLYQPRYNV (79 aa). Residues 204-239 enclose the UVR domain; sequence QQVLHQLIERMENASKALNFEEAARIRDQIQAVRRV.

Belongs to the UvrC family. As to quaternary structure, interacts with UvrB in an incision complex.

The protein resides in the cytoplasm. Functionally, the UvrABC repair system catalyzes the recognition and processing of DNA lesions. UvrC both incises the 5' and 3' sides of the lesion. The N-terminal half is responsible for the 3' incision and the C-terminal half is responsible for the 5' incision. This chain is UvrABC system protein C, found in Serratia proteamaculans (strain 568).